A 520-amino-acid chain; its full sequence is Bifunctional purine biosynthesis protein PurH (520 aa).

Positions 1-150 (MSDDRKAIKR…KNHPSVAVVV (150 aa)) constitute an MGS-like domain.

This sequence belongs to the PurH family.

The enzyme catalyses (6R)-10-formyltetrahydrofolate + 5-amino-1-(5-phospho-beta-D-ribosyl)imidazole-4-carboxamide = 5-formamido-1-(5-phospho-D-ribosyl)imidazole-4-carboxamide + (6S)-5,6,7,8-tetrahydrofolate. The catalysed reaction is IMP + H2O = 5-formamido-1-(5-phospho-D-ribosyl)imidazole-4-carboxamide. The protein operates within purine metabolism; IMP biosynthesis via de novo pathway; 5-formamido-1-(5-phospho-D-ribosyl)imidazole-4-carboxamide from 5-amino-1-(5-phospho-D-ribosyl)imidazole-4-carboxamide (10-formyl THF route): step 1/1. Its pathway is purine metabolism; IMP biosynthesis via de novo pathway; IMP from 5-formamido-1-(5-phospho-D-ribosyl)imidazole-4-carboxamide: step 1/1. The chain is Bifunctional purine biosynthesis protein PurH from Corynebacterium glutamicum (strain R).